A 325-amino-acid chain; its full sequence is Protease HtpX homolog (325 aa).

Residues 20–40 traverse the membrane as a helical segment; the sequence is IGYLLGGGGGMMIALVIAVAM. Residue His130 coordinates Zn(2+). Glu131 is a catalytic residue. Zn(2+) is bound at residue His134. Transmembrane regions (helical) follow at residues 145–165 and 173–193; these read IVATLAGAISMLGNFAFFLGG and VMGVVGTLLAMIVAPFGAMIV. Glu202 contributes to the Zn(2+) binding site. Positions 286-325 are disordered; that stretch reads SAAMTARAAAPSQNSGPWGQRSDNAGGNSNGGSRYRGPWS. A compositionally biased stretch (low complexity) spans 306–325; the sequence is RSDNAGGNSNGGSRYRGPWS.

This sequence belongs to the peptidase M48B family. The cofactor is Zn(2+).

Its subcellular location is the cell inner membrane. This is Protease HtpX homolog from Brucella melitensis biotype 2 (strain ATCC 23457).